A 124-amino-acid chain; its full sequence is UPF0375 protein Y45F10C.4 (124 aa).

An N-terminal signal peptide occupies residues 1–23; sequence MNFLPSTVLLLSFVVAIISGSFS. N-linked (GlcNAc...) asparagine glycosylation is found at Asn36 and Asn62.

Belongs to the UPF0375 family.

The protein resides in the secreted. The protein is UPF0375 protein Y45F10C.4 of Caenorhabditis elegans.